Here is a 279-residue protein sequence, read N- to C-terminus: Phosphatidylglycerol--prolipoprotein diacylglyceryl transferase (279 aa).

A run of 3 helical transmembrane segments spans residues 22 to 42 (WYGIIIACGILLGYFIAQAAL), 52 to 72 (LIDIIFYSAIVGFIVARIYFV), and 89 to 109 (IWHGGIAIHGGLIGGLISGII). Arg-137 is an a 1,2-diacyl-sn-glycero-3-phospho-(1'-sn-glycerol) binding site. Transmembrane regions (helical) follow at residues 203–223 (LGETFFGYLIWYSVGRFFVEA) and 235–255 (IRVAQLVSVVLILISVIFVIY).

Belongs to the Lgt family.

The protein resides in the cell membrane. It carries out the reaction L-cysteinyl-[prolipoprotein] + a 1,2-diacyl-sn-glycero-3-phospho-(1'-sn-glycerol) = an S-1,2-diacyl-sn-glyceryl-L-cysteinyl-[prolipoprotein] + sn-glycerol 1-phosphate + H(+). Its pathway is protein modification; lipoprotein biosynthesis (diacylglyceryl transfer). Functionally, catalyzes the transfer of the diacylglyceryl group from phosphatidylglycerol to the sulfhydryl group of the N-terminal cysteine of a prolipoprotein, the first step in the formation of mature lipoproteins. This is Phosphatidylglycerol--prolipoprotein diacylglyceryl transferase from Staphylococcus epidermidis (strain ATCC 12228 / FDA PCI 1200).